The sequence spans 802 residues: E3 ubiquitin-protein ligase RNF10 (802 aa).

Low complexity-rich tracts occupy residues 1–31 (MPQS…SGSS), 78–90 (SNQS…QKSK), and 104–113 (SKPFSSSSNG). The interval 1–134 (MPQSSPSTAA…AEFSPAQFSG (134 aa)) is disordered. The residue at position 5 (S5) is a Phosphoserine. Phosphoserine is present on S110. A compositionally biased stretch (basic and acidic residues) spans 114–124 (GRRDEVAEAQR). S128 bears the Phosphoserine mark. An RING-type zinc finger spans residues 225–267 (CPICLYPPTAAKITRCGHIFCWACILHYLSLSERTWSKCPICY). Positions 645–654 (DSALGPTSTE) are enriched in polar residues. 3 disordered regions span residues 645–664 (DSAL…LSPL), 716–753 (DGWP…VPSF), and 767–802 (KLDT…VHTK). The segment covering 716–728 (DGWPKAAPKKDDN) has biased composition (basic and acidic residues). Residues 793-802 (LFSTSVVHTK) are compositionally biased toward polar residues.

The protein belongs to the RNF10 family. In terms of assembly, interacts with MEOX2.

Its subcellular location is the cytoplasm. It is found in the nucleus. The catalysed reaction is S-ubiquitinyl-[E2 ubiquitin-conjugating enzyme]-L-cysteine + [acceptor protein]-L-lysine = [E2 ubiquitin-conjugating enzyme]-L-cysteine + N(6)-ubiquitinyl-[acceptor protein]-L-lysine.. It functions in the pathway protein modification; protein ubiquitination. Its function is as follows. E3 ubiquitin-protein ligase that catalyzes monoubiquitination of 40S ribosomal proteins RPS2/us5 and RPS3/us3 in response to ribosome stalling. Part of a ribosome quality control that takes place when ribosomes have stalled during translation initiation (iRQC): RNF10 acts by mediating monoubiquitination of RPS2/us5 and RPS3/us3, promoting their degradation by the proteasome. Also promotes ubiquitination of 40S ribosomal proteins in response to ribosome stalling during translation elongation. The action of RNF10 in iRQC is counteracted by USP10. May also act as a transcriptional factor involved in the regulation of MAG (Myelin-associated glycoprotein) expression. Acts as a regulator of Schwann cell differentiation and myelination. This chain is E3 ubiquitin-protein ligase RNF10, found in Rattus norvegicus (Rat).